We begin with the raw amino-acid sequence, 97 residues long: Protein RADIALIS-like 6 (97 aa).

One can recognise an SANT domain in the interval 7–59; the sequence is SSISPWTFSQNKMFERALAVYDKDTPDRWHNVAKAVGGKTVEEVKRHYDILVE.

Expressed in the micropylar endosperm surrounding globular-stage embryos but no expression was detected elsewhere, including floral tissues.

The protein localises to the nucleus. Functionally, probable transcription factor. In Arabidopsis thaliana (Mouse-ear cress), this protein is Protein RADIALIS-like 6 (RL6).